The sequence spans 380 residues: Chaperone protein DnaJ (380 aa).

Residues 6–71 (DYYAILEVSR…QKRAAYDQYG (66 aa)) form the J domain. The segment at 136 to 215 (GVKKDVRVIT…CHGEGTVEKE (80 aa)) adopts a CR-type zinc-finger fold. Zn(2+) is bound by residues C149, C152, C167, C170, C189, C192, C203, and C206. CXXCXGXG motif repeat units lie at residues 149–156 (CEACHGTG), 167–174 (CPSCHGAG), 189–196 (CPTCHGAG), and 203–210 (CKVCHGEG).

Belongs to the DnaJ family. As to quaternary structure, homodimer. Zn(2+) is required as a cofactor.

Its subcellular location is the cytoplasm. In terms of biological role, participates actively in the response to hyperosmotic and heat shock by preventing the aggregation of stress-denatured proteins and by disaggregating proteins, also in an autonomous, DnaK-independent fashion. Unfolded proteins bind initially to DnaJ; upon interaction with the DnaJ-bound protein, DnaK hydrolyzes its bound ATP, resulting in the formation of a stable complex. GrpE releases ADP from DnaK; ATP binding to DnaK triggers the release of the substrate protein, thus completing the reaction cycle. Several rounds of ATP-dependent interactions between DnaJ, DnaK and GrpE are required for fully efficient folding. Also involved, together with DnaK and GrpE, in the DNA replication of plasmids through activation of initiation proteins. The protein is Chaperone protein DnaJ of Acetobacter pasteurianus (strain NBRC 105184 / IFO 3283-01).